Reading from the N-terminus, the 194-residue chain is MPKLILASTSPWRRALLEKLQISFECAAPEVDETPRSDESPRQLVLRLAQEKAQSLASRYPDHLIIGSDQVCVLDGEITGKPLTEENARLQLRKASGNIVTFYTGLALFNSANGHLQTEVEPFDVHFRHLSEAEIDNYVRKEHPLHCAGSFKSEGFGITLFERLEGRDPNTLVGLPLIALCQMLRREGKNPLMG.

Asp-69 (proton acceptor) is an active-site residue.

This sequence belongs to the Maf family. YceF subfamily. A divalent metal cation is required as a cofactor.

The protein localises to the cytoplasm. The catalysed reaction is N(7)-methyl-GTP + H2O = N(7)-methyl-GMP + diphosphate + H(+). Functionally, nucleoside triphosphate pyrophosphatase that hydrolyzes 7-methyl-GTP (m(7)GTP). May have a dual role in cell division arrest and in preventing the incorporation of modified nucleotides into cellular nucleic acids. This chain is 7-methyl-GTP pyrophosphatase (yceF), found in Shigella flexneri.